The following is a 132-amino-acid chain: Small ribosomal subunit protein uS11 (132 aa).

The protein belongs to the universal ribosomal protein uS11 family. Part of the 30S ribosomal subunit.

Located on the platform of the 30S subunit. The polypeptide is Small ribosomal subunit protein uS11 (Saccharolobus solfataricus (strain ATCC 35092 / DSM 1617 / JCM 11322 / P2) (Sulfolobus solfataricus)).